We begin with the raw amino-acid sequence, 257 residues long: UPF0246 protein YaaA (257 aa).

Belongs to the UPF0246 family.

This Salmonella typhi protein is UPF0246 protein YaaA.